Consider the following 90-residue polypeptide: Large ribosomal subunit protein uL23c (90 aa).

The protein belongs to the universal ribosomal protein uL23 family. Part of the 50S ribosomal subunit.

The protein localises to the plastid. The protein resides in the chloroplast. In terms of biological role, binds to 23S rRNA. This chain is Large ribosomal subunit protein uL23c (rpl23), found in Oltmannsiellopsis viridis (Marine flagellate).